The sequence spans 391 residues: uncharacterized protein (391 aa).

The signal sequence occupies residues 1–20 (MRKLFLLSILMIGVIVAFAG). Cys21 carries S-archaeol cysteine lipidation. A Fe/B12 periplasmic-binding domain is found at 104 to 377 (RIVTDFYCPI…DFAKMIHPEL (274 aa)).

The protein localises to the cell membrane. This is an uncharacterized protein from Methanocaldococcus jannaschii (strain ATCC 43067 / DSM 2661 / JAL-1 / JCM 10045 / NBRC 100440) (Methanococcus jannaschii).